The primary structure comprises 355 residues: MALRLLKLAATSASARVVAAGAQRVRGIHSSVQCKLRYGMWHFLLGDKASKRLTERSRVITVDGNICTGKGKLAKEIAEKLGFKHFPEAGIHYPDSTTGDGKPLATDYNGNCSLEKFYDDPRSNDGNSYRLQSWLYSSRLLQYSDALEHLLTTGQGVVLERSIFSDFVFLEAMYNQGFIRKQCVDHYNEVKSVTICDYLPPHLVIYIDVPVPEVQRRIQKKGDPHEMKITSAYLQDIENAYKKTFLPEMSEKCEVLQYSAREAQDSKKVVEDIEYLKFDKGPWLKQDNRTLYHLRLLVQDKFEVLNYTSIPIFLPEVTIGAHQTDRVLHQFRELPGRKYSPGYNTEVGDKWIWLK.

Residues 1–35 (MALRLLKLAATSASARVVAAGAQRVRGIHSSVQCK) constitute a mitochondrion transit peptide. The residue at position 250 (serine 250) is a Phosphoserine; by PINK1. An N6-succinyllysine modification is found at lysine 285.

It belongs to the complex I NDUFA10 subunit family. As to quaternary structure, complex I is composed of 45 different subunits. This a component of the hydrophobic protein fraction. FAD is required as a cofactor. Post-translationally, phosphorylation at Ser-250 by PINK1 is required for the binding and/or reduction of the complex I substrate ubiquinone.

The protein localises to the mitochondrion matrix. Its function is as follows. Accessory subunit of the mitochondrial membrane respiratory chain NADH dehydrogenase (Complex I), that is believed not to be involved in catalysis. Complex I functions in the transfer of electrons from NADH to the respiratory chain. The immediate electron acceptor for the enzyme is believed to be ubiquinone. The chain is NADH dehydrogenase [ubiquinone] 1 alpha subcomplex subunit 10, mitochondrial (NDUFA10) from Homo sapiens (Human).